We begin with the raw amino-acid sequence, 787 residues long: Disintegrin and metalloproteinase domain-containing protein 32 (787 aa).

Residues 1–16 form the signal peptide; that stretch reads MFRLWLLLAGLCGLLA. Ser-17 carries the post-translational modification Phosphoserine. The propeptide occupies 17–174; the sequence is SRPGFQNSLL…PMDDNIFISE (158 aa). Residues Asn-39 and Asn-125 are each glycosylated (N-linked (GlcNAc...) asparagine). Over 175–682 the chain is Extracellular; that stretch reads KSEPAVPDLF…ERASGKTENT (508 aa). The region spanning 186-383 is the Peptidase M12B domain; that stretch reads LYLEMHIVVD…VGVKCLQNKP (198 aa). 4 disulfides stabilise this stretch: Cys-295-Cys-378, Cys-337-Cys-362, Cys-339-Cys-344, and Cys-450-Cys-471. The Disintegrin domain maps to 391–479; the sequence is KPVCGNGRLE…ECGPDITLIN (89 aa). Asn-465 and Asn-598 each carry an N-linked (GlcNAc...) asparagine glycan. In terms of domain architecture, EGF-like spans 622 to 654; sequence SAHVCSQQCSGHGVCDSRNKCHCSPGYKPPNCQ. Cystine bridges form between Cys-626–Cys-636, Cys-630–Cys-642, and Cys-644–Cys-653. Residues 683–703 traverse the membrane as a helical segment; the sequence is WLLGFLIALPILIVTTAIVLA. The Cytoplasmic segment spans residues 704–787; it reads RKQLKKWFAK…DSTQTQSSSN (84 aa). A disordered region spans residues 715–787; it reads EEFPSSESKS…DSTQTQSSSN (73 aa). Residues 728-749 show a composition bias toward polar residues; that stretch reads TQTYASQSSSEGSTQTYASQTR. Residues 771–787 are compositionally biased toward low complexity; it reads TSRSKSQDSTQTQSSSN.

Testis specific.

The protein localises to the membrane. Its function is as follows. May play a role in sperm development and fertilization This is a non-catalytic metalloprotease-like protein. In Homo sapiens (Human), this protein is Disintegrin and metalloproteinase domain-containing protein 32 (ADAM32).